The following is a 759-amino-acid chain: 1,4-alpha-glucan branching enzyme GlgB (759 aa).

The disordered stretch occupies residues 1–22; sequence MAKTKGLPKDTAVTPSPHLRPH. The active-site Nucleophile is Asp-422. Catalysis depends on Glu-475, which acts as the Proton donor.

The protein belongs to the glycosyl hydrolase 13 family. GlgB subfamily. In terms of assembly, monomer.

The enzyme catalyses Transfers a segment of a (1-&gt;4)-alpha-D-glucan chain to a primary hydroxy group in a similar glucan chain.. The protein operates within glycan biosynthesis; glycogen biosynthesis. Functionally, catalyzes the formation of the alpha-1,6-glucosidic linkages in glycogen by scission of a 1,4-alpha-linked oligosaccharide from growing alpha-1,4-glucan chains and the subsequent attachment of the oligosaccharide to the alpha-1,6 position. The polypeptide is 1,4-alpha-glucan branching enzyme GlgB (Mycobacterium sp. (strain KMS)).